Here is a 444-residue protein sequence, read N- to C-terminus: Na(+)-translocating NADH-quinone reductase subunit A (444 aa).

It belongs to the NqrA family. Composed of six subunits; NqrA, NqrB, NqrC, NqrD, NqrE and NqrF.

The enzyme catalyses a ubiquinone + n Na(+)(in) + NADH + H(+) = a ubiquinol + n Na(+)(out) + NAD(+). In terms of biological role, NQR complex catalyzes the reduction of ubiquinone-1 to ubiquinol by two successive reactions, coupled with the transport of Na(+) ions from the cytoplasm to the periplasm. NqrA to NqrE are probably involved in the second step, the conversion of ubisemiquinone to ubiquinol. The polypeptide is Na(+)-translocating NADH-quinone reductase subunit A (Shewanella denitrificans (strain OS217 / ATCC BAA-1090 / DSM 15013)).